Consider the following 73-residue polypeptide: U-scoloptoxin(15)-Sm2a (73 aa).

Residues 1 to 20 form the signal peptide; that stretch reads MKFYIVFCLFVVLLINFAAA. Intrachain disulfides connect Cys-39–Cys-66 and Cys-43–Cys-68.

This sequence belongs to the scoloptoxin-15 family. Expressed by the venom gland.

It localises to the secreted. Activity unknown, even that a lot of targets (Kv, Nav, Cav) have been tested and activities on insects and mice have been tested. The protein is U-scoloptoxin(15)-Sm2a of Scolopendra morsitans (Tanzanian blue ringleg centipede).